Reading from the N-terminus, the 493-residue chain is Aspartyl/glutamyl-tRNA(Asn/Gln) amidotransferase subunit B (493 aa).

Positions 268–291 (HYQEADGSTSKGRPKETAEDYRYF) are disordered. Over residues 280–291 (RPKETAEDYRYF) the composition is skewed to basic and acidic residues.

Belongs to the GatB/GatE family. GatB subfamily. In terms of assembly, heterotrimer of A, B and C subunits.

The catalysed reaction is L-glutamyl-tRNA(Gln) + L-glutamine + ATP + H2O = L-glutaminyl-tRNA(Gln) + L-glutamate + ADP + phosphate + H(+). It carries out the reaction L-aspartyl-tRNA(Asn) + L-glutamine + ATP + H2O = L-asparaginyl-tRNA(Asn) + L-glutamate + ADP + phosphate + 2 H(+). In terms of biological role, allows the formation of correctly charged Asn-tRNA(Asn) or Gln-tRNA(Gln) through the transamidation of misacylated Asp-tRNA(Asn) or Glu-tRNA(Gln) in organisms which lack either or both of asparaginyl-tRNA or glutaminyl-tRNA synthetases. The reaction takes place in the presence of glutamine and ATP through an activated phospho-Asp-tRNA(Asn) or phospho-Glu-tRNA(Gln). The chain is Aspartyl/glutamyl-tRNA(Asn/Gln) amidotransferase subunit B from Corynebacterium glutamicum (strain ATCC 13032 / DSM 20300 / JCM 1318 / BCRC 11384 / CCUG 27702 / LMG 3730 / NBRC 12168 / NCIMB 10025 / NRRL B-2784 / 534).